A 158-amino-acid chain; its full sequence is MPVFTHLNENNEVHMVDVTPKPDVSREATAKGRIYLRPETLAAIAEGRVLKGNVLATAQVAGTLAVKQTWALIPMCHPLPVGGVTIWFEQTDEYIEAFCRVKTYGKTGIEMEALTGVSLSLLTIWDMVKSAEKDEAGQYPVTRIDGISVIEKIKGTPE.

Substrate-binding positions include 75–77 (MCH) and 111–112 (ME). Asp-126 is a catalytic residue.

This sequence belongs to the MoaC family. As to quaternary structure, homohexamer; trimer of dimers.

It carries out the reaction (8S)-3',8-cyclo-7,8-dihydroguanosine 5'-triphosphate = cyclic pyranopterin phosphate + diphosphate. It functions in the pathway cofactor biosynthesis; molybdopterin biosynthesis. Its function is as follows. Catalyzes the conversion of (8S)-3',8-cyclo-7,8-dihydroguanosine 5'-triphosphate to cyclic pyranopterin monophosphate (cPMP). The polypeptide is Probable cyclic pyranopterin monophosphate synthase (Methanocorpusculum labreanum (strain ATCC 43576 / DSM 4855 / Z)).